The primary structure comprises 217 residues: Dense granule protein 1 (217 aa).

Positions 1–19 are cleaved as a signal peptide; it reads MARQATFIVALCVCGLAIA. A compositionally biased stretch (polar residues) spans 171-183; the sequence is VASEDSALGNSEE. Residues 171–217 form a disordered region; the sequence is VASEDSALGNSEEQYVEGTVNGSSDPEQERAGGPLIPEGDEQEVDTE. An N-linked (GlcNAc...) asparagine glycan is attached at Asn191. The segment covering 208-217 has biased composition (acidic residues); it reads EGDEQEVDTE.

The protein belongs to the Gra7 family.

The protein resides in the secreted. The polypeptide is Dense granule protein 1 (DG1) (Neospora caninum (Coccidian parasite)).